The sequence spans 93 residues: Exodeoxyribonuclease 7 small subunit (93 aa).

Positions 1-17 are enriched in low complexity; it reads MAKSSASSLSSAKPVAA. A disordered region spans residues 1–22; that stretch reads MAKSSASSLSSAKPVAAGPDAS.

Belongs to the XseB family. As to quaternary structure, heterooligomer composed of large and small subunits.

The protein localises to the cytoplasm. The enzyme catalyses Exonucleolytic cleavage in either 5'- to 3'- or 3'- to 5'-direction to yield nucleoside 5'-phosphates.. Its function is as follows. Bidirectionally degrades single-stranded DNA into large acid-insoluble oligonucleotides, which are then degraded further into small acid-soluble oligonucleotides. The chain is Exodeoxyribonuclease 7 small subunit from Polaromonas naphthalenivorans (strain CJ2).